The following is a 407-amino-acid chain: 3-oxoacyl-[acyl-carrier-protein] synthase 1 (407 aa).

Residues 1–405 (MKRVVITGLG…GTNVSLIIKK (405 aa)) enclose the Ketosynthase family 3 (KS3) domain. Active-site for beta-ketoacyl synthase activity residues include Cys-164, His-299, and His-335.

The protein belongs to the thiolase-like superfamily. Beta-ketoacyl-ACP synthases family. In terms of assembly, homodimer.

It is found in the cytoplasm. The enzyme catalyses a fatty acyl-[ACP] + malonyl-[ACP] + H(+) = a 3-oxoacyl-[ACP] + holo-[ACP] + CO2. It catalyses the reaction (3Z)-decenoyl-[ACP] + malonyl-[ACP] + H(+) = 3-oxo-(5Z)-dodecenoyl-[ACP] + holo-[ACP] + CO2. The protein operates within lipid metabolism; fatty acid biosynthesis. Involved in the type II fatty acid elongation cycle. Catalyzes the elongation of a wide range of acyl-ACP by the addition of two carbons from malonyl-ACP to an acyl acceptor. Can also use unsaturated fatty acids. Catalyzes a key reaction in unsaturated fatty acid (UFA) synthesis, the elongation of the cis-3-decenoyl-ACP produced by FabA. In Buchnera aphidicola subsp. Baizongia pistaciae (strain Bp), this protein is 3-oxoacyl-[acyl-carrier-protein] synthase 1 (fabB).